Here is a 403-residue protein sequence, read N- to C-terminus: S-adenosylmethionine synthase (403 aa).

Position 17 (His17) interacts with ATP. Asp19 contacts Mg(2+). Glu45 provides a ligand contact to K(+). Positions 58 and 104 each coordinate L-methionine. Residues 104-114 (QSPDIAQGVDT) form a flexible loop region. ATP is bound by residues 179-181 (DGK), 250-251 (KF), Asp259, 265-266 (RK), Ala282, and Lys286. Residue Asp259 participates in L-methionine binding. Residue Lys290 participates in L-methionine binding.

It belongs to the AdoMet synthase family. As to quaternary structure, homotetramer; dimer of dimers. Mg(2+) is required as a cofactor. Requires K(+) as cofactor.

The protein resides in the cytoplasm. It catalyses the reaction L-methionine + ATP + H2O = S-adenosyl-L-methionine + phosphate + diphosphate. The protein operates within amino-acid biosynthesis; S-adenosyl-L-methionine biosynthesis; S-adenosyl-L-methionine from L-methionine: step 1/1. Functionally, catalyzes the formation of S-adenosylmethionine (AdoMet) from methionine and ATP. The overall synthetic reaction is composed of two sequential steps, AdoMet formation and the subsequent tripolyphosphate hydrolysis which occurs prior to release of AdoMet from the enzyme. The protein is S-adenosylmethionine synthase of Mycobacterium ulcerans (strain Agy99).